The chain runs to 471 residues: Trigger factor (471 aa).

In terms of domain architecture, PPIase FKBP-type spans 169-254; it reads EDRVTIDYLG…VKEVAKPNEL (86 aa). Residues 435-471 are disordered; sequence VSKEELTAEDEDAASEAKPAKKAAAKKKAEEGKSEEA. Residues 461-471 are compositionally biased toward basic and acidic residues; the sequence is KKAEEGKSEEA.

Belongs to the FKBP-type PPIase family. Tig subfamily.

It localises to the cytoplasm. The enzyme catalyses [protein]-peptidylproline (omega=180) = [protein]-peptidylproline (omega=0). In terms of biological role, involved in protein export. Acts as a chaperone by maintaining the newly synthesized protein in an open conformation. Functions as a peptidyl-prolyl cis-trans isomerase. In Brucella abortus (strain S19), this protein is Trigger factor.